Reading from the N-terminus, the 306-residue chain is tRNA dimethylallyltransferase 2 (306 aa).

11–18 (GPTASGKT) provides a ligand contact to ATP. 13 to 18 (TASGKT) contacts substrate. Residues 36–39 (DSRQ) form an interaction with substrate tRNA region.

It belongs to the IPP transferase family. As to quaternary structure, monomer. Requires Mg(2+) as cofactor.

It catalyses the reaction adenosine(37) in tRNA + dimethylallyl diphosphate = N(6)-dimethylallyladenosine(37) in tRNA + diphosphate. Functionally, catalyzes the transfer of a dimethylallyl group onto the adenine at position 37 in tRNAs that read codons beginning with uridine, leading to the formation of N6-(dimethylallyl)adenosine (i(6)A). The chain is tRNA dimethylallyltransferase 2 from Bacteroides fragilis (strain ATCC 25285 / DSM 2151 / CCUG 4856 / JCM 11019 / LMG 10263 / NCTC 9343 / Onslow / VPI 2553 / EN-2).